The following is a 525-amino-acid chain: Bifunctional purine biosynthesis protein PurH (525 aa).

The MGS-like domain occupies Met-1–Thr-147.

The protein belongs to the PurH family.

It catalyses the reaction (6R)-10-formyltetrahydrofolate + 5-amino-1-(5-phospho-beta-D-ribosyl)imidazole-4-carboxamide = 5-formamido-1-(5-phospho-D-ribosyl)imidazole-4-carboxamide + (6S)-5,6,7,8-tetrahydrofolate. The enzyme catalyses IMP + H2O = 5-formamido-1-(5-phospho-D-ribosyl)imidazole-4-carboxamide. It participates in purine metabolism; IMP biosynthesis via de novo pathway; 5-formamido-1-(5-phospho-D-ribosyl)imidazole-4-carboxamide from 5-amino-1-(5-phospho-D-ribosyl)imidazole-4-carboxamide (10-formyl THF route): step 1/1. It functions in the pathway purine metabolism; IMP biosynthesis via de novo pathway; IMP from 5-formamido-1-(5-phospho-D-ribosyl)imidazole-4-carboxamide: step 1/1. This Chromobacterium violaceum (strain ATCC 12472 / DSM 30191 / JCM 1249 / CCUG 213 / NBRC 12614 / NCIMB 9131 / NCTC 9757 / MK) protein is Bifunctional purine biosynthesis protein PurH.